The primary structure comprises 684 residues: DNA-directed RNA polymerase subunit beta' (684 aa).

Positions 69, 71, 87, and 90 each coordinate Zn(2+). Residues Asp491, Asp493, and Asp495 each contribute to the Mg(2+) site.

Belongs to the RNA polymerase beta' chain family. RpoC1 subfamily. As to quaternary structure, in plastids the minimal PEP RNA polymerase catalytic core is composed of four subunits: alpha, beta, beta', and beta''. When a (nuclear-encoded) sigma factor is associated with the core the holoenzyme is formed, which can initiate transcription. Mg(2+) serves as cofactor. Requires Zn(2+) as cofactor.

It localises to the plastid. The protein localises to the chloroplast. It carries out the reaction RNA(n) + a ribonucleoside 5'-triphosphate = RNA(n+1) + diphosphate. Functionally, DNA-dependent RNA polymerase catalyzes the transcription of DNA into RNA using the four ribonucleoside triphosphates as substrates. The polypeptide is DNA-directed RNA polymerase subunit beta' (Phaseolus vulgaris (Kidney bean)).